Reading from the N-terminus, the 124-residue chain is S-adenosylmethionine decarboxylase proenzyme (124 aa).

S63 functions as the Schiff-base intermediate with substrate; via pyruvic acid in the catalytic mechanism. S63 carries the post-translational modification Pyruvic acid (Ser); by autocatalysis. The Proton acceptor; for processing activity role is filled by H68. The active-site Proton donor; for catalytic activity is C83.

Belongs to the prokaryotic AdoMetDC family. Type 1 subfamily. As to quaternary structure, heterotetramer of two alpha and two beta chains arranged as a dimer of alpha/beta heterodimers. Requires pyruvate as cofactor. In terms of processing, is synthesized initially as an inactive proenzyme. Formation of the active enzyme involves a self-maturation process in which the active site pyruvoyl group is generated from an internal serine residue via an autocatalytic post-translational modification. Two non-identical subunits are generated from the proenzyme in this reaction, and the pyruvate is formed at the N-terminus of the alpha chain, which is derived from the carboxyl end of the proenzyme. The post-translation cleavage follows an unusual pathway, termed non-hydrolytic serinolysis, in which the side chain hydroxyl group of the serine supplies its oxygen atom to form the C-terminus of the beta chain, while the remainder of the serine residue undergoes an oxidative deamination to produce ammonia and the pyruvoyl group blocking the N-terminus of the alpha chain.

It catalyses the reaction S-adenosyl-L-methionine + H(+) = S-adenosyl 3-(methylsulfanyl)propylamine + CO2. It participates in amine and polyamine biosynthesis; S-adenosylmethioninamine biosynthesis; S-adenosylmethioninamine from S-adenosyl-L-methionine: step 1/1. In terms of biological role, catalyzes the decarboxylation of S-adenosylmethionine to S-adenosylmethioninamine (dcAdoMet), the propylamine donor required for the synthesis of the polyamines spermine and spermidine from the diamine putrescine. The polypeptide is S-adenosylmethionine decarboxylase proenzyme (Geobacillus kaustophilus (strain HTA426)).